The chain runs to 149 residues: Ribonuclease VapC2 (149 aa).

A PINc domain is found at 11 to 149; that stretch reads IFFDSNILIY…RVDFLEIIEI (139 aa). Mg(2+)-binding residues include Asp14 and Asp116.

Belongs to the PINc/VapC protein family. Mg(2+) is required as a cofactor.

Its function is as follows. Toxic component of a type II toxin-antitoxin (TA) system. An RNase. Its cognate antitoxin is VapB2. The polypeptide is Ribonuclease VapC2 (Methanocaldococcus jannaschii (strain ATCC 43067 / DSM 2661 / JAL-1 / JCM 10045 / NBRC 100440) (Methanococcus jannaschii)).